The chain runs to 281 residues: Probable endonuclease 4 (281 aa).

Zn(2+) is bound by residues His69, His109, Glu145, Asp179, His182, His216, Asp229, His231, and Glu261.

This sequence belongs to the AP endonuclease 2 family. Requires Zn(2+) as cofactor.

The enzyme catalyses Endonucleolytic cleavage to 5'-phosphooligonucleotide end-products.. Functionally, endonuclease IV plays a role in DNA repair. It cleaves phosphodiester bonds at apurinic or apyrimidinic (AP) sites, generating a 3'-hydroxyl group and a 5'-terminal sugar phosphate. The chain is Probable endonuclease 4 from Pectobacterium carotovorum subsp. carotovorum (strain PC1).